The following is a 346-amino-acid chain: Small ribosomal subunit biogenesis GTPase RsgA (346 aa).

The disordered stretch occupies residues 1–26 (MAKRKLTQNQTRRIQSNNAKTLHRHK). Polar residues predominate over residues 7–20 (TQNQTRRIQSNNAK). Residues 103-271 (ENEISRPDYY…LIDSPGIREF (169 aa)) form the CP-type G domain. Residues 159-162 (NKVD) and 213-221 (GQSGVGKSS) each bind GTP. Positions 295, 300, 302, and 308 each coordinate Zn(2+).

Belongs to the TRAFAC class YlqF/YawG GTPase family. RsgA subfamily. As to quaternary structure, monomer. Associates with 30S ribosomal subunit, binds 16S rRNA. Zn(2+) serves as cofactor.

The protein resides in the cytoplasm. Functionally, one of several proteins that assist in the late maturation steps of the functional core of the 30S ribosomal subunit. Helps release RbfA from mature subunits. May play a role in the assembly of ribosomal proteins into the subunit. Circularly permuted GTPase that catalyzes slow GTP hydrolysis, GTPase activity is stimulated by the 30S ribosomal subunit. The chain is Small ribosomal subunit biogenesis GTPase RsgA from Haemophilus influenzae (strain PittGG).